The sequence spans 222 residues: Sugar fermentation stimulation protein homolog (222 aa).

The protein belongs to the SfsA family.

This is Sugar fermentation stimulation protein homolog from Thermoplasma acidophilum (strain ATCC 25905 / DSM 1728 / JCM 9062 / NBRC 15155 / AMRC-C165).